The sequence spans 119 residues: MHRLTLPKSARLLKRKQFVYVQRCGQYCRTDQATLRIVPSRHSNIRKVGVTVSKKFGKAHQRNRFKRIVREAFRHVRPNLPACQVVVSPKGGTLPNFGKLSADLLKHIPEALPLVTSSK.

It belongs to the RnpA family. In terms of assembly, consists of a catalytic RNA component (M1 or rnpB) and a protein subunit.

The enzyme catalyses Endonucleolytic cleavage of RNA, removing 5'-extranucleotides from tRNA precursor.. RNaseP catalyzes the removal of the 5'-leader sequence from pre-tRNA to produce the mature 5'-terminus. It can also cleave other RNA substrates such as 4.5S RNA. The protein component plays an auxiliary but essential role in vivo by binding to the 5'-leader sequence and broadening the substrate specificity of the ribozyme. The polypeptide is Ribonuclease P protein component (Chlamydia muridarum (strain MoPn / Nigg)).